A 378-amino-acid polypeptide reads, in one-letter code: D-alanine--D-alanine ligase (378 aa).

The 207-residue stretch at 140–346 (KKIISQAGIR…YSDLIDRLIQ (207 aa)) folds into the ATP-grasp domain. Residue 170–225 (EEKLGNLTFVKPAKQGSSVGIHRVTNAEEYEKALDDAFKYDYKILVEQGIANPQEI) coordinates ATP. 3 residues coordinate Mg(2+): Asp300, Glu313, and Asn315.

It belongs to the D-alanine--D-alanine ligase family. Requires Mg(2+) as cofactor. Mn(2+) is required as a cofactor.

It is found in the cytoplasm. It carries out the reaction 2 D-alanine + ATP = D-alanyl-D-alanine + ADP + phosphate + H(+). It functions in the pathway cell wall biogenesis; peptidoglycan biosynthesis. Its function is as follows. Cell wall formation. The protein is D-alanine--D-alanine ligase of Limosilactobacillus reuteri (strain DSM 20016) (Lactobacillus reuteri).